A 124-amino-acid polypeptide reads, in one-letter code: Aspartate 1-decarboxylase (124 aa).

Serine 21 functions as the Schiff-base intermediate with substrate; via pyruvic acid in the catalytic mechanism. Pyruvic acid (Ser) is present on serine 21. Residue threonine 53 coordinates substrate. The Proton donor role is filled by tyrosine 54. 69 to 71 (GAA) provides a ligand contact to substrate.

The protein belongs to the PanD family. Heterooctamer of four alpha and four beta subunits. It depends on pyruvate as a cofactor. Post-translationally, is synthesized initially as an inactive proenzyme, which is activated by self-cleavage at a specific serine bond to produce a beta-subunit with a hydroxyl group at its C-terminus and an alpha-subunit with a pyruvoyl group at its N-terminus.

The protein localises to the cytoplasm. The enzyme catalyses L-aspartate + H(+) = beta-alanine + CO2. It participates in cofactor biosynthesis; (R)-pantothenate biosynthesis; beta-alanine from L-aspartate: step 1/1. Functionally, catalyzes the pyruvoyl-dependent decarboxylation of aspartate to produce beta-alanine. The chain is Aspartate 1-decarboxylase from Dehalococcoides mccartyi (strain CBDB1).